The chain runs to 1044 residues: Elongation factor 3A (1044 aa).

At Ser-2 the chain carries N-acetylserine. The stretch at 5–42 (QQSIKVLEELFQKLSVATADNRHEIASEVASFLNGNII) is one HEAT 1 repeat. ADP is bound by residues Ile-42, His-44, and Ser-83. HEAT repeat units lie at residues 86 to 123 (PYIV…AVNP), 125 to 162 (AIKA…AAKD), 166 to 203 (LRMP…TVDN), 205 to 241 (DIER…EVTP), 242 to 279 (ATLS…LVED), and 285 to 323 (PFLG…VGNV). Residues Lys-187 and Lys-196 each carry the N6,N6,N6-trimethyllysine modification. A Glycyl lysine isopeptide (Lys-Gly) (interchain with G-Cter in ubiquitin) cross-link involves residue Lys-350. Residues Thr-392, His-396, and Glu-397 each contribute to the ADP site. Positions 426–641 (DEGEDLCNCE…CPAAKAYEEL (216 aa)) constitute an ABC transporter 1 domain. Lys-636 is covalently cross-linked (Glycyl lysine isopeptide (Lys-Gly) (interchain with G-Cter in ubiquitin)). Ser-642 is modified (phosphoserine). The ABC transporter 2 domain occupies 667 to 993 (VKVTNMEFQY…AGPRIEKKED (327 aa)). Residue Asn-703 participates in ADP binding. Residue Lys-789 is modified to N6,N6,N6-trimethyllysine. Residues Glu-922, Asn-925, and His-951 each contribute to the ADP site. Thr-972 is subject to Phosphothreonine. Phosphoserine is present on Ser-974. Residues 974-1044 (SGHNWVSGQG…DAYVSSDEEF (71 aa)) form a disordered region. Over residues 1007–1031 (GGKKKKKLSSAELRKKKKERMKKKK) the composition is skewed to basic residues. Residues Ser-1039 and Ser-1040 each carry the phosphoserine modification.

This sequence belongs to the ABC transporter superfamily. ABCF family. EF3 subfamily. In terms of assembly, monomer. Interacts with elongation factor 1A (eEF1A). Interacts through its N-terminus with 18S rRNA. Associates with ribosomes; preferentially binds ribosomes in the post-translocational state (bearing a peptidyl-tRNA in the P-site) in the presence of ATP, suggesting that ATP hydrolysis is required for ribosome dissociation.

It localises to the cytoplasm. It is found in the cytosol. The catalysed reaction is ATP + H2O = ADP + phosphate + H(+). The protein operates within protein biosynthesis; polypeptide chain elongation. Its activity is regulated as follows. Inhibited by the translational inhibitors neomycin and alpha-sarcin, which suppress the ATPase activity. Its function is as follows. Ribosome-dependent ATPase that functions in cytoplasmic translation elongation. Required for the ATP-dependent release of deacylated tRNA from the ribosomal E-site during protein biosynthesis. Stimulates the eEF1A-dependent binding of aminoacyl-tRNA to the ribosomal A-site, which has reduced affinity for tRNA as long as the E-site is occupied. Assists translation termination by stimulating the release of nascent protein from the ribosome by release factors. In nutrient-replete conditions, occupies the space on the ribosome bound by GCN1 during amino acid starvation conditions, and therefore indirectly negatively regulates GCN2 kinase activity in replete conditions. The polypeptide is Elongation factor 3A (YEF3) (Saccharomyces cerevisiae (strain ATCC 204508 / S288c) (Baker's yeast)).